The primary structure comprises 37 residues: Large ribosomal subunit protein bL36c (37 aa).

It belongs to the bacterial ribosomal protein bL36 family.

Its subcellular location is the plastid. It localises to the chloroplast. This chain is Large ribosomal subunit protein bL36c, found in Dioscorea elephantipes (Elephant's foot yam).